A 457-amino-acid polypeptide reads, in one-letter code: Siroheme synthase (457 aa).

Residues 1-204 (MDHLPIFCQL…ADEKAVNATT (204 aa)) form a precorrin-2 dehydrogenase /sirohydrochlorin ferrochelatase region. Residues 22 to 23 (DV) and 43 to 44 (LT) each bind NAD(+). Position 128 is a phosphoserine (S128). The uroporphyrinogen-III C-methyltransferase stretch occupies residues 216–457 (GEVVLVGAGP…RDKLNWFSNY (242 aa)). P225 lines the S-adenosyl-L-methionine pocket. D248 functions as the Proton acceptor in the catalytic mechanism. The Proton donor role is filled by K270. S-adenosyl-L-methionine is bound by residues 301–303 (GGD), I306, 331–332 (TA), M382, and G411.

In the N-terminal section; belongs to the precorrin-2 dehydrogenase / sirohydrochlorin ferrochelatase family. It in the C-terminal section; belongs to the precorrin methyltransferase family.

The enzyme catalyses uroporphyrinogen III + 2 S-adenosyl-L-methionine = precorrin-2 + 2 S-adenosyl-L-homocysteine + H(+). It catalyses the reaction precorrin-2 + NAD(+) = sirohydrochlorin + NADH + 2 H(+). It carries out the reaction siroheme + 2 H(+) = sirohydrochlorin + Fe(2+). It participates in cofactor biosynthesis; adenosylcobalamin biosynthesis; precorrin-2 from uroporphyrinogen III: step 1/1. The protein operates within cofactor biosynthesis; adenosylcobalamin biosynthesis; sirohydrochlorin from precorrin-2: step 1/1. It functions in the pathway porphyrin-containing compound metabolism; siroheme biosynthesis; precorrin-2 from uroporphyrinogen III: step 1/1. Its pathway is porphyrin-containing compound metabolism; siroheme biosynthesis; siroheme from sirohydrochlorin: step 1/1. It participates in porphyrin-containing compound metabolism; siroheme biosynthesis; sirohydrochlorin from precorrin-2: step 1/1. Its function is as follows. Multifunctional enzyme that catalyzes the SAM-dependent methylations of uroporphyrinogen III at position C-2 and C-7 to form precorrin-2 via precorrin-1. Then it catalyzes the NAD-dependent ring dehydrogenation of precorrin-2 to yield sirohydrochlorin. Finally, it catalyzes the ferrochelation of sirohydrochlorin to yield siroheme. This chain is Siroheme synthase, found in Salmonella heidelberg (strain SL476).